The chain runs to 183 residues: Glutamyl-tRNA(Gln) amidotransferase subunit F, mitochondrial (183 aa).

The protein belongs to the GatF family. Subunit of the heterotrimeric GatFAB amidotransferase (AdT) complex, composed of A (HER2), B (PET112) and F (YGR102C) subunits.

The protein localises to the mitochondrion inner membrane. The enzyme catalyses L-glutamyl-tRNA(Gln) + L-glutamine + ATP + H2O = L-glutaminyl-tRNA(Gln) + L-glutamate + ADP + phosphate + H(+). In terms of biological role, allows the formation of correctly charged Gln-tRNA(Gln) through the transamidation of misacylated Glu-tRNA(Gln) in the mitochondria. The reaction takes place in the presence of glutamine and ATP through an activated gamma-phospho-Glu-tRNA(Gln). Required for proper protein synthesis within the mitochondrion. This chain is Glutamyl-tRNA(Gln) amidotransferase subunit F, mitochondrial, found in Saccharomyces cerevisiae (strain ATCC 204508 / S288c) (Baker's yeast).